The primary structure comprises 493 residues: Probable cytosol aminopeptidase (493 aa).

Positions 265 and 270 each coordinate Mn(2+). Lysine 277 is an active-site residue. 3 residues coordinate Mn(2+): aspartate 288, aspartate 347, and glutamate 349. Residue arginine 351 is part of the active site.

It belongs to the peptidase M17 family. Mn(2+) serves as cofactor.

Its subcellular location is the cytoplasm. It carries out the reaction Release of an N-terminal amino acid, Xaa-|-Yaa-, in which Xaa is preferably Leu, but may be other amino acids including Pro although not Arg or Lys, and Yaa may be Pro. Amino acid amides and methyl esters are also readily hydrolyzed, but rates on arylamides are exceedingly low.. The catalysed reaction is Release of an N-terminal amino acid, preferentially leucine, but not glutamic or aspartic acids.. Its function is as follows. Presumably involved in the processing and regular turnover of intracellular proteins. Catalyzes the removal of unsubstituted N-terminal amino acids from various peptides. The sequence is that of Probable cytosol aminopeptidase from Hydrogenovibrio crunogenus (strain DSM 25203 / XCL-2) (Thiomicrospira crunogena).